Here is a 591-residue protein sequence, read N- to C-terminus: MRRLLTLILLLVALPAGAGLFDSRPGASLGGGLDGGGFLKVDQAFKPSVERSDAQHVLLRFVNAEGYYLYRHRFQFKVEPAQVSLGQVQLPAGKQHHDEYFGDTEVYYNIVDLEIPLNNPARQPYTLVVTYQGCADKGLCYPPETRRFDIDGGAATPAASDAAGKGPLEHKGKRSLLFFFLAGLTLTFTPCVLPMLPILSGVVLRGRPGGGRGFVLSLAYVLPMALCFALLGALMGMFGASLNLQAQLQSPWVLVPFAAFFALFAVAMFGFFELRLPGFIREPLDRLAGDARGGSILGAATLGVLSSLLVSPCVSAPLAASLLYISASGDAWGGGLQLFALGLGMGTPLVVFGAGGGALLPKSGAWMNGVRNAFGVLLLAVAVWLLERVVSGPVALMLWGMLAGGAGLALGALEFTPKSAARRLLQLLGLMFLTYAVAAWIGALQGESDPIHPLGRSVPSIHAGPPSTPGEWQNLTTPAQLDAALAEARQAGKPVLLDWYADWCISCKVIERQVLTDPTVQARLPAYRLLRFDITESNPAQRGLLDRYNLFGPPAILFFAPGGDEWSDLRVIGEIDAAGLAERLRRAATRQ.

A signal peptide spans 1–18 (MRRLLTLILLLVALPAGA). The Periplasmic segment spans residues 19-175 (GLFDSRPGAS…GPLEHKGKRS (157 aa)). Cystine bridges form between Cys134-Cys140 and Cys191-Cys313. The helical transmembrane segment at 176–196 (LLFFFLAGLTLTFTPCVLPML) threads the bilayer. Over 197-213 (PILSGVVLRGRPGGGRG) the chain is Cytoplasmic. The chain crosses the membrane as a helical span at residues 214–234 (FVLSLAYVLPMALCFALLGAL). The Periplasmic segment spans residues 235–251 (MGMFGASLNLQAQLQSP). Residues 252–272 (WVLVPFAAFFALFAVAMFGFF) form a helical membrane-spanning segment. The Cytoplasmic portion of the chain corresponds to 273-295 (ELRLPGFIREPLDRLAGDARGGS). A helical membrane pass occupies residues 296-316 (ILGAATLGVLSSLLVSPCVSA). At 317-338 (PLAASLLYISASGDAWGGGLQL) the chain is on the periplasmic side. The helical transmembrane segment at 339–359 (FALGLGMGTPLVVFGAGGGAL) threads the bilayer. Topologically, residues 360 to 365 (LPKSGA) are cytoplasmic. Residues 366–386 (WMNGVRNAFGVLLLAVAVWLL) traverse the membrane as a helical segment. The Periplasmic segment spans residues 387–392 (ERVVSG). The helical transmembrane segment at 393–413 (PVALMLWGMLAGGAGLALGAL) threads the bilayer. The Cytoplasmic segment spans residues 414–423 (EFTPKSAARR). Residues 424–444 (LLQLLGLMFLTYAVAAWIGAL) traverse the membrane as a helical segment. The Periplasmic portion of the chain corresponds to 445-591 (QGESDPIHPL…ERLRRAATRQ (147 aa)). Positions 452-589 (HPLGRSVPSI…LAERLRRAAT (138 aa)) constitute a Thioredoxin domain. An intrachain disulfide couples Cys504 to Cys507.

The protein belongs to the thioredoxin family. DsbD subfamily.

It is found in the cell inner membrane. The catalysed reaction is [protein]-dithiol + NAD(+) = [protein]-disulfide + NADH + H(+). The enzyme catalyses [protein]-dithiol + NADP(+) = [protein]-disulfide + NADPH + H(+). Its function is as follows. Required to facilitate the formation of correct disulfide bonds in some periplasmic proteins and for the assembly of the periplasmic c-type cytochromes. Acts by transferring electrons from cytoplasmic thioredoxin to the periplasm. This transfer involves a cascade of disulfide bond formation and reduction steps. This chain is Thiol:disulfide interchange protein DsbD 1, found in Pseudomonas aeruginosa (strain ATCC 15692 / DSM 22644 / CIP 104116 / JCM 14847 / LMG 12228 / 1C / PRS 101 / PAO1).